Reading from the N-terminus, the 179-residue chain is Large ribosomal subunit protein uL5 (179 aa).

The protein belongs to the universal ribosomal protein uL5 family. In terms of assembly, part of the 50S ribosomal subunit; part of the 5S rRNA/L5/L18/L25 subcomplex. Contacts the 5S rRNA and the P site tRNA. Forms a bridge to the 30S subunit in the 70S ribosome.

In terms of biological role, this is one of the proteins that bind and probably mediate the attachment of the 5S RNA into the large ribosomal subunit, where it forms part of the central protuberance. In the 70S ribosome it contacts protein S13 of the 30S subunit (bridge B1b), connecting the 2 subunits; this bridge is implicated in subunit movement. Contacts the P site tRNA; the 5S rRNA and some of its associated proteins might help stabilize positioning of ribosome-bound tRNAs. The polypeptide is Large ribosomal subunit protein uL5 (Rickettsia typhi (strain ATCC VR-144 / Wilmington)).